Here is a 187-residue protein sequence, read N- to C-terminus: Large ribosomal subunit protein uL24c (187 aa).

A chloroplast-targeting transit peptide spans 1–41 (MAALQSSFAGLSTSFFGQRFSPPLSLPPLVKSTEGPCLIQA).

The protein belongs to the universal ribosomal protein uL24 family. Part of the 50S ribosomal subunit.

It is found in the plastid. Its subcellular location is the chloroplast. Functionally, one of two assembly initiator proteins, it binds directly to the 5'-end of the 23S rRNA, where it nucleates assembly of the 50S subunit. The protein is Large ribosomal subunit protein uL24c (RPL24) of Nicotiana tabacum (Common tobacco).